A 371-amino-acid chain; its full sequence is Cytochrome b (371 aa).

4 helical membrane-spanning segments follow: residues 25–45 (FGSMLLTCSMIQVLTGFFLAV), 69–90 (WMVQNLHAIGASMFFICIYIHI), 105–125 (WLSGTTLLIMLMATAFFGYVL), and 170–190 (FFALHFILPFGIISLSSLHVL). Heme b-binding residues include histidine 75 and histidine 89. 2 residues coordinate heme b: histidine 174 and histidine 188. An a ubiquinone-binding site is contributed by histidine 193. 4 consecutive transmembrane segments (helical) span residues 218 to 238 (MKDLLMLTTTLTLLLMTISFF), 280 to 300 (LGGALALAMSIMILFTVPFIH), 312 to 332 (LMQLMFWTFTSTFVLITWAAT), and 339 to 358 (FISISQVASIIYFTFFISNP).

It belongs to the cytochrome b family. In terms of assembly, the cytochrome bc1 complex contains 3 respiratory subunits (MT-CYB, CYC1 and UQCRFS1), 2 core proteins (UQCRC1 and UQCRC2) and probably 6 low-molecular weight proteins. Heme b serves as cofactor.

It localises to the mitochondrion inner membrane. Component of the ubiquinol-cytochrome c reductase complex (complex III or cytochrome b-c1 complex) that is part of the mitochondrial respiratory chain. The b-c1 complex mediates electron transfer from ubiquinol to cytochrome c. Contributes to the generation of a proton gradient across the mitochondrial membrane that is then used for ATP synthesis. The sequence is that of Cytochrome b (MT-CYB) from Boa constrictor (Boa).